We begin with the raw amino-acid sequence, 371 residues long: tRNA-specific 2-thiouridylase MnmA (371 aa).

Residues 12–19 and methionine 38 each bind ATP; that span reads GMSGGVDS. The interval 98–100 is interaction with target base in tRNA; it reads NPD. The active-site Nucleophile is the cysteine 103. Cysteine 103 and cysteine 200 are joined by a disulfide. Glycine 128 lines the ATP pocket. The tract at residues 150–152 is interaction with tRNA; the sequence is KDQ. Cysteine 200 acts as the Cysteine persulfide intermediate in catalysis. The interaction with tRNA stretch occupies residues 312–313; that stretch reads RY.

This sequence belongs to the MnmA/TRMU family. Interacts with TusE.

It localises to the cytoplasm. It catalyses the reaction S-sulfanyl-L-cysteinyl-[protein] + uridine(34) in tRNA + AH2 + ATP = 2-thiouridine(34) in tRNA + L-cysteinyl-[protein] + A + AMP + diphosphate + H(+). Functionally, catalyzes the 2-thiolation of uridine at the wobble position (U34) of tRNA(Lys), tRNA(Glu) and tRNA(Gln), leading to the formation of s(2)U34, the first step of tRNA-mnm(5)s(2)U34 synthesis. Sulfur is provided by IscS, via a sulfur-relay system. Binds ATP and its substrate tRNAs. The chain is tRNA-specific 2-thiouridylase MnmA from Yersinia pseudotuberculosis serotype O:1b (strain IP 31758).